A 764-amino-acid chain; its full sequence is DNA-binding protein SATB1 (764 aa).

Over residues 1–15 (MDHLNEATQGKEHSE) the composition is skewed to basic and acidic residues. Residues 1–56 (MDHLNEATQGKEHSEMSNNVSDPKGPPAKIARLEQNGSPLGRGRLGSTGGKMQGVP) are disordered. The short motif at 20 to 40 (VSDPKGPPAKIARLEQNGSPL) is the Nuclear localization signal element. A compositionally biased stretch (gly residues) spans 43-52 (GRLGSTGGKM). A Glycyl lysine isopeptide (Lys-Gly) (interchain with G-Cter in SUMO2) cross-link involves residue lysine 51. Residues 71-172 (GTMLPVFCVV…VVTLKIQLHS (102 aa)) form the CMP domain. An N6-acetyllysine modification is found at lysine 136. The Protein interaction motif lies at 139 to 143 (PVPLS). The 74-residue stretch at 175–248 (KLEDLPPEQW…WYKHFKKTKD (74 aa)) folds into the CUTL domain. At serine 185 the chain carries Phosphoserine. Residues 224-278 (YYANVSAAKCQEFGRWYKHFKKTKDMMVEMDSLSELSQQGANHVNFGQQPVPGNT) are nuclear matrix targeting sequence (NMTS). The short motif at 224–278 (YYANVSAAKCQEFGRWYKHFKKTKDMMVEMDSLSELSQQGANHVNFGQQPVPGNT) is the Nuclear matrix targeting sequence (NMTS) element. The span at 266-296 (HVNFGQQPVPGNTAEQPPSPAQLSHGSQPSV) shows a compositional bias: polar residues. Residues 266–307 (HVNFGQQPVPGNTAEQPPSPAQLSHGSQPSVRTPLPNLHPGL) are disordered. The segment at residues 361 to 448 (LEQQVSTNTE…ERDRIYQDER (88 aa)) is a DNA-binding region (CUT 1). DNA is bound by residues glutamine 390, 400 to 410 (RTQGLLSEILR), and asparagine 425. A disordered region spans residues 450-474 (RSLNAASAMGPAPLLSTPPSRPPQV). The CUT 2 DNA-binding region spans 484 to 571 (NGKPENNTMN…ERDAIYEQES (88 aa)). The interval 591 to 650 (QIQQQQQQQQQQQQQQQPPPPPPQPQPQPQAGPRLPPRQPTVASSAESDEENRQKTRPRT) is disordered. Residues 593–606 (QQQQQQQQQQQQQQ) are compositionally biased toward low complexity. A compositionally biased stretch (pro residues) spans 607-629 (QPPPPPPQPQPQPQAGPRLPPRQ). A Phosphoserine modification is found at serine 638. A DNA-binding region (homeobox) is located at residues 646-705 (TRPRTKISVEALGILQSFIQDVGLYPDEEAIQTLSAQLDLPKYTIIKFFQNQRYYLKHHG). A Glycyl lysine isopeptide (Lys-Gly) (interchain with G-Cter in SUMO) cross-link involves residue lysine 745.

It belongs to the CUT homeobox family. In terms of assembly, interacts with PCAF. Interacts with sumoylated PML and HDAC1 Tat via the CMP domain. Also interacts with DYNLT3 and POLR2J2. Binds to EP300. Homodimer. Part of the nuclear protein complex gamma-globin promoter and enhancer binding factor (gamma-PE) composed at least of SATB1 and HOXB2. Interaction with CtBP1 when not acetylated stabilizes attachment to DNA and promotes transcription repression. Interacts with CUX1 (via DNA-binding domains); the interaction inhibits the attachment of both proteins to DNA. Sumoylated. Sumoylation promotes cleavage by caspases. Post-translationally, phosphorylated by PKC. Acetylated by PCAF. Phosphorylated form interacts with HDAC1, but unphosphorylated form interacts with PCAF. DNA binding properties are activated by phosphorylation and inactivated by acetylation. In opposition, gene expression is down-regulated by phosphorylation but up-regulated by acetylation. In terms of processing, cleaved at Asp-254 by caspase-3 and caspase-6 during T-cell apoptosis in thymus and during B-cell stimulation. The cleaved forms cannot dimerize and lose transcription regulation function because of impaired DNA and chromatin association. In terms of tissue distribution, expressed in the subventricular zone, rostral migratory stream and in the olfactory bulb (at protein level). Mainly expressed in thymus, spleen, and lymph nodes with a lower level observed in the brain.

The protein resides in the nucleus. It is found in the PML body. Functionally, required for the switching of fetal globin species, and beta- and gamma-globin genes regulation during erythroid differentiation. Plays a role in chromatin organization and nuclear architecture during apoptosis. Crucial silencing factor contributing to the initiation of X inactivation mediated by Xist RNA that occurs during embryogenesis and in lymphoma. Binds to DNA at special AT-rich sequences, the consensus SATB1-binding sequence (CSBS), at nuclear matrix- or scaffold-associated regions. Thought to recognize the sugar-phosphate structure of double-stranded DNA. Transcriptional repressor controlling nuclear and viral gene expression in a phosphorylated and acetylated status-dependent manner, by binding to matrix attachment regions (MARs) of DNA and inducing a local chromatin-loop remodeling. Acts as a docking site for several chromatin remodeling enzymes and also by recruiting corepressors (HDACs) or coactivators (HATs) directly to promoters and enhancers. Modulates genes that are essential in the maturation of the immune T-cell CD8SP from thymocytes. Promotes neuronal differentiation of neural stem/progenitor cells in the adult subventricular zone, possibly by positively regulating the expression of NEUROD1. This is DNA-binding protein SATB1 (Satb1) from Mus musculus (Mouse).